Here is a 693-residue protein sequence, read N- to C-terminus: Glycine--tRNA ligase beta subunit (693 aa).

It belongs to the class-II aminoacyl-tRNA synthetase family. Tetramer of two alpha and two beta subunits.

The protein resides in the cytoplasm. The catalysed reaction is tRNA(Gly) + glycine + ATP = glycyl-tRNA(Gly) + AMP + diphosphate. In Ligilactobacillus salivarius (strain UCC118) (Lactobacillus salivarius), this protein is Glycine--tRNA ligase beta subunit.